The primary structure comprises 552 residues: MDKLNKLAVPAGEKFRKLQKMVHDIKKNESGIINKFKKFQNEQVALICKTGKDTWDRLKKKPPPSLPRRDYASEHADNEEEQWSDDFDSDYENPDGHSDSEMYVVPSEENPDDSYEPPPSEQEKKKIPSSFPISRGEYADNRTSHHQLPPINKPLPSTPSSALPRPKKPSLPSPAAKPKLPLKPRECSDDEDNYIVPVDNDDDNYIEPTESSTPPPAKPPVNRFMKPPAKSALPTPPKPSLASDMQEVYEVPEEEEELSPPPVTRFTKPLPATRAQNAEHSHMHSMTRESPKLDASRNILPLPRNRLHPKTDHEANNNDENHSFSNTQESKFPPGAAPSPLPRALKKTSNAVNPAKPCLPSRDTFTVNEDKPTAADRRRGSSHEFPLPPLPSGTPKSSLQKPLVLPKVPEAPSRALGTSPHSSISSISSTADQDAGVHSKAWYAATCDRKTAEDALYRSNKDGSFLIRKSSGQDSRQPYTLVVFYNRRVYNIPIRFIESTRQYALGREKCGEERFDSVAEIVENHQHTSLVLIDSQNNTKDSTKLKYIVRVS.

The interval 50–431 (TGKDTWDRLK…SSISSISSTA (382 aa)) is disordered. A compositionally biased stretch (basic and acidic residues) spans 67–76 (PRRDYASEHA). Residues 77–93 (DNEEEQWSDDFDSDYEN) are compositionally biased toward acidic residues. Phosphotyrosine; by SYK occurs at positions 91, 103, 115, 194, 205, and 249. Residues 188-205 (SDDEDNYIVPVDNDDDNY) are compositionally biased toward acidic residues. Basic and acidic residues-rich tracts occupy residues 277–295 (NAEH…KLDA), 309–322 (PKTD…DENH), and 368–382 (NEDK…RGSS). The region spanning 442–549 (WYAATCDRKT…KDSTKLKYIV (108 aa)) is the SH2 domain.

As to quaternary structure, associates with PLCG1, VAV1 and NCK1 in a B-cell antigen receptor-dependent fashion. Interacts through its SH2 domain with CD79A. Interacts with VAV3, PLCG2 and GRB2. Following BCR activation, phosphorylated on tyrosine residues by SYK and LYN. When phosphorylated, serves as a scaffold to assemble downstream targets of antigen activation, including PLCG1, VAV1, GRB2 and NCK1. Phosphorylation is required for both Ca(2+) and MAPK signaling pathways. Phosphorylation of Tyr-103, Tyr-194 and Tyr-205 facilitates PLCG1 binding. Phosphorylation of Tyr-115 facilitates BTK binding. Phosphorylation of Tyr-91 facilitates VAV1 and NCK1 binding. Highly expressed in the bursa, very low expression in ovary and spleen. Expression was variable among B-cell lines. Highly expressed in immature B-cell lines such as DT40 and CL18, low expression was seen in relatively mature B-cell lines, such as 293B9 and 249L4. No expression was seen in T-cell lines.

The protein resides in the cytoplasm. The protein localises to the cell membrane. Its function is as follows. Functions as a central linker protein, downstream of the B-cell receptor (BCR), bridging the SYK kinase to a multitude of signaling pathways and regulating biological outcomes of B-cell function and development. Plays a role in the activation of ERK/EPHB2, MAP kinase p38 and JNK. Modulates AP1 activation. Important for the activation of NF-kappa-B and NFAT. Plays an important role in BCR-mediated PLCG1 and PLCG2 activation and Ca(2+) mobilization and is required for trafficking of the BCR to late endosomes. However, does not seem to be required for pre-BCR-mediated activation of MAP kinase and phosphatidyl-inositol 3 (PI3) kinase signaling. May be required for the RAC1-JNK pathway. Plays a critical role in orchestrating the pro-B cell to pre-B cell transition. Plays a critical role in B-cell development in the bursa. Plays an important role in BCR-induced apoptosis. The protein is B-cell linker protein (BLNK) of Gallus gallus (Chicken).